Reading from the N-terminus, the 284-residue chain is Formamidopyrimidine-DNA glycosylase (284 aa).

The active-site Schiff-base intermediate with DNA is the P2. The Proton donor role is filled by E3. The Proton donor; for beta-elimination activity role is filled by K60. H99, R118, and R163 together coordinate DNA. The FPG-type zinc-finger motif lies at 248–282; the sequence is WVYGRQGQPCRTCGQTIERIKLVGRSTHFCPQCQP. R272 acts as the Proton donor; for delta-elimination activity in catalysis.

The protein belongs to the FPG family. In terms of assembly, monomer. Requires Zn(2+) as cofactor.

It catalyses the reaction Hydrolysis of DNA containing ring-opened 7-methylguanine residues, releasing 2,6-diamino-4-hydroxy-5-(N-methyl)formamidopyrimidine.. It carries out the reaction 2'-deoxyribonucleotide-(2'-deoxyribose 5'-phosphate)-2'-deoxyribonucleotide-DNA = a 3'-end 2'-deoxyribonucleotide-(2,3-dehydro-2,3-deoxyribose 5'-phosphate)-DNA + a 5'-end 5'-phospho-2'-deoxyribonucleoside-DNA + H(+). Involved in base excision repair of DNA damaged by oxidation or by mutagenic agents. Acts as a DNA glycosylase that recognizes and removes damaged bases. Has a preference for oxidized purines, such as 7,8-dihydro-8-oxoguanine (8-oxoG). Has AP (apurinic/apyrimidinic) lyase activity and introduces nicks in the DNA strand. Cleaves the DNA backbone by beta-delta elimination to generate a single-strand break at the site of the removed base with both 3'- and 5'-phosphates. The sequence is that of Formamidopyrimidine-DNA glycosylase from Acaryochloris marina (strain MBIC 11017).